The sequence spans 164 residues: MTCQSLIYQLIVLTGKKGWVLASFCSEEAEILYQLQGVNKVIGVKFEACTGISQSRLELLTLLYHADEISQSDLQKKVNIDSAAVTRHLKQLESKGMVSRRRKPEDNRITLVRLTDQGRERIESSKKEKERFMKEMLANVSAEERRLLIDVLARMRNNINNIEA.

The region spanning 28–157 (EAEILYQLQG…LIDVLARMRN (130 aa)) is the HTH marR-type domain. The segment at residues 71-94 (QSDLQKKVNIDSAAVTRHLKQLES) is a DNA-binding region (H-T-H motif).

This is an uncharacterized protein from Bacillus subtilis (strain 168).